The sequence spans 116 residues: Type IV narrow pilus major component PilA5 (116 aa).

Positions 1 to 5 (MRAKG) are cleaved as a propeptide — leader sequence. N-methylphenylalanine is present on Phe6. A helical membrane pass occupies residues 6-26 (FTLIELAIVIVIIGILVAIAV).

Glycosylated.

It is found in the cell inner membrane. It localises to the cell outer membrane. The protein resides in the periplasm. In terms of biological role, plays an essential role in forming the main structure of the narrow T4P pili that participates in twitching motility. This is Type IV narrow pilus major component PilA5 (pilA5) from Thermus thermophilus (strain ATCC BAA-163 / DSM 7039 / HB27).